Consider the following 484-residue polypeptide: Endoglucanase 3 (484 aa).

Positions 1–21 are cleaved as a signal peptide; it reads MASPFFFVFLLSALSLENTYA. Asp77 (nucleophile) is an active-site residue. N-linked (GlcNAc...) asparagine glycosylation occurs at Asn370. Active-site residues include His402, Asp453, and Glu462.

This sequence belongs to the glycosyl hydrolase 9 (cellulase E) family. Specifically expressed in root cap cells.

The protein resides in the secreted. The catalysed reaction is Endohydrolysis of (1-&gt;4)-beta-D-glucosidic linkages in cellulose, lichenin and cereal beta-D-glucans.. In terms of biological role, may be involved in the sloughing (cell-cell separation) of the root cap cells from root tip. This chain is Endoglucanase 3 (CEL5), found in Arabidopsis thaliana (Mouse-ear cress).